The sequence spans 831 residues: Periplasmic nitrate reductase (831 aa).

The tat-type signal signal peptide spans 1–38 (MSMARRDFIKQTAAAAAATVAGVPLTGYTQNIVTESEA). Residues 41–97 (LKWSKAPCRFCGTGCGVNVAVKDNQVVATHGDFNAEVNKGLNCVKGYFLSKIMYGSD) enclose the 4Fe-4S Mo/W bis-MGD-type domain. 4 residues coordinate [4Fe-4S] cluster: cysteine 48, cysteine 51, cysteine 55, and cysteine 83. Residues lysine 85, glutamine 152, asparagine 177, cysteine 181, 214–221 (WGSNMAEM), 245–249 (STFEH), 264–266 (QSD), methionine 375, glutamine 379, asparagine 485, 511–512 (SD), lysine 534, aspartate 561, and 721–730 (TGRVLEHWHS) each bind Mo-bis(molybdopterin guanine dinucleotide). Residue tryptophan 797 participates in substrate binding. Asparagine 805 and lysine 822 together coordinate Mo-bis(molybdopterin guanine dinucleotide).

It belongs to the prokaryotic molybdopterin-containing oxidoreductase family. NasA/NapA/NarB subfamily. Component of the periplasmic nitrate reductase NapAB complex composed of NapA and NapB. Requires [4Fe-4S] cluster as cofactor. It depends on Mo-bis(molybdopterin guanine dinucleotide) as a cofactor. Predicted to be exported by the Tat system. The position of the signal peptide cleavage has not been experimentally proven.

It is found in the periplasm. It carries out the reaction 2 Fe(II)-[cytochrome] + nitrate + 2 H(+) = 2 Fe(III)-[cytochrome] + nitrite + H2O. Functionally, catalytic subunit of the periplasmic nitrate reductase complex NapAB. Receives electrons from NapB and catalyzes the reduction of nitrate to nitrite. The polypeptide is Periplasmic nitrate reductase (Bordetella parapertussis (strain 12822 / ATCC BAA-587 / NCTC 13253)).